A 213-amino-acid chain; its full sequence is Orotate phosphoribosyltransferase (213 aa).

Residue lysine 26 coordinates 5-phospho-alpha-D-ribose 1-diphosphate. 34 to 35 (FF) contacts orotate. Residues 72 to 73 (YK), arginine 99, lysine 100, lysine 103, histidine 105, and 124 to 132 (DDVITAGTA) each bind 5-phospho-alpha-D-ribose 1-diphosphate. Positions 128 and 156 each coordinate orotate.

The protein belongs to the purine/pyrimidine phosphoribosyltransferase family. PyrE subfamily. Homodimer. Mg(2+) serves as cofactor.

It catalyses the reaction orotidine 5'-phosphate + diphosphate = orotate + 5-phospho-alpha-D-ribose 1-diphosphate. Its pathway is pyrimidine metabolism; UMP biosynthesis via de novo pathway; UMP from orotate: step 1/2. In terms of biological role, catalyzes the transfer of a ribosyl phosphate group from 5-phosphoribose 1-diphosphate to orotate, leading to the formation of orotidine monophosphate (OMP). The polypeptide is Orotate phosphoribosyltransferase (Enterobacter sp. (strain 638)).